The following is a 249-amino-acid chain: Small ribosomal subunit protein uS2 (249 aa).

Belongs to the universal ribosomal protein uS2 family.

In Chlorobaculum tepidum (strain ATCC 49652 / DSM 12025 / NBRC 103806 / TLS) (Chlorobium tepidum), this protein is Small ribosomal subunit protein uS2.